The primary structure comprises 1343 residues: DNA-directed RNA polymerase subunit beta (1343 aa).

The protein belongs to the RNA polymerase beta chain family. As to quaternary structure, the RNAP catalytic core consists of 2 alpha, 1 beta, 1 beta' and 1 omega subunit. When a sigma factor is associated with the core the holoenzyme is formed, which can initiate transcription.

The catalysed reaction is RNA(n) + a ribonucleoside 5'-triphosphate = RNA(n+1) + diphosphate. Functionally, DNA-dependent RNA polymerase catalyzes the transcription of DNA into RNA using the four ribonucleoside triphosphates as substrates. The chain is DNA-directed RNA polymerase subunit beta from Shewanella pealeana (strain ATCC 700345 / ANG-SQ1).